Reading from the N-terminus, the 475-residue chain is Protein FAM161A (475 aa).

A disordered region spans residues 53 to 107 (ISDSSSSSASEKSCSHPALSVTSLSEPDLDGSSSLSTTTDEGLPDLEEKTPGESS). 2 stretches are compositionally biased toward low complexity: residues 54–64 (SDSSSSSASEK) and 82–93 (DGSSSLSTTTDE). The stretch at 162–234 (VREQNRREKA…RERNRAALLA (73 aa)) forms a coiled coil. Residues 255–434 (KLRDLFRAKR…PTASSRGREQ (180 aa)) form a required for interaction with CFAP418 region. A disordered region spans residues 314-337 (RSACRRFRDPRSPAKPRGKHRRRC). Residues 327-337 (AKPRGKHRRRC) show a composition bias toward basic residues. K377 participates in a covalent cross-link: Glycyl lysine isopeptide (Lys-Gly) (interchain with G-Cter in SUMO2). Residues 389-441 (EEILRETRRPGRSPRRKSPGRSSNPKPRPHECSPPMPTASSRGREQAIRRSEK) form a disordered region. A compositionally biased stretch (basic residues) spans 398-407 (PGRSPRRKSP). Basic and acidic residues predominate over residues 430–441 (RGREQAIRRSEK).

This sequence belongs to the FAM161 family. As to quaternary structure, interacts (via central region) with CFAP418 (via N-terminus); the interaction is direct. Interacts (via C-terminus) with microtubules. Interacts with LCA5. Interacts with CEP290. Interacts with SDCCAG8. Interacts with FAM161B. Interacts with POC1B. Interacts with CEP78. Forms a microtubule-associated complex with POC5, CETN2 and POC1B. Interacts with CCDC15. As to expression, expressed in the retina.

The protein resides in the cytoplasm. Its subcellular location is the cytoskeleton. It is found in the cilium basal body. It localises to the cell projection. The protein localises to the cilium. The protein resides in the microtubule organizing center. Its subcellular location is the centrosome. It is found in the centriole. In terms of biological role, involved in ciliogenesis. In Mus musculus (Mouse), this protein is Protein FAM161A.